Reading from the N-terminus, the 357-residue chain is Glucose-6-phosphatase catalytic subunit 1 (357 aa).

Topologically, residues 1 to 28 are lumenal; it reads MEEGMNILHDFGIQSTRYLQVNYQDSQD. Residues 29–49 traverse the membrane as a helical segment; the sequence is WFILVSVIADLRNAFYVLFPI. Residues 50-60 are Cytoplasmic-facing; the sequence is WFHLKETVGIN. A helical membrane pass occupies residues 61 to 81; that stretch reads LLWVAVVGDWFNLVFKWILFG. Topologically, residues 82–117 are lumenal; it reads QRPYWWVLDTDYYSNSSVPIIKQFPVTCETGPGSPS. Arginine 83 is a binding site for substrate. A glycan (N-linked (GlcNAc...) asparagine) is linked at asparagine 96. A helical membrane pass occupies residues 118–138; sequence GHAMGAAGVYYVMVTSTLAIF. Histidine 119 acts as the Proton donor in catalysis. Residues 139–147 are Cytoplasmic-facing; sequence RGKKKPTYG. A helical membrane pass occupies residues 148–168; sequence FRCLNVILWLGFWAVQLNVCL. At 169–179 the chain is on the lumenal side; the sequence is SRIYLAAHFPH. Arginine 170 lines the substrate pocket. Histidine 176 serves as the catalytic Nucleophile. Residues 180–202 form a helical membrane-spanning segment; the sequence is QVVAGVLSGIAVAETFSHIRGIY. The Cytoplasmic segment spans residues 203–211; it reads NASLRKYCL. A helical transmembrane segment spans residues 212–232; it reads ITIFLFGFALGFYLLLKGLGV. Over 233 to 254 the chain is Lumenal; the sequence is DLLWTLEKAKRWCERPEWVHLD. A helical transmembrane segment spans residues 255–275; it reads TTPFASLFKNLGTLLGLGLAL. The Cytoplasmic portion of the chain corresponds to 276 to 291; that stretch reads NSSMYRKSCKGELSKL. The helical transmembrane segment at 292–312 threads the bilayer; the sequence is LPFRFACIVASLVLLHLFDSL. Topologically, residues 313–320 are lumenal; that stretch reads KPPSQVEL. Residues 321-341 form a helical membrane-spanning segment; that stretch reads IFYILSFCKSATVPFASVSLI. Topologically, residues 342-357 are cytoplasmic; it reads PYCLARILGQTHKKSL. Residues 354–357 carry the Prevents secretion from ER motif; the sequence is KKSL.

It belongs to the glucose-6-phosphatase family. As to expression, liver and kidney.

It is found in the endoplasmic reticulum membrane. It carries out the reaction D-glucose 6-phosphate + H2O = D-glucose + phosphate. The protein operates within carbohydrate biosynthesis; gluconeogenesis. In terms of biological role, hydrolyzes glucose-6-phosphate to glucose in the endoplasmic reticulum. Forms with the glucose-6-phosphate transporter (SLC37A4/G6PT) the complex responsible for glucose production in the terminal step of glycogenolysis and gluconeogenesis. Hence, it is the key enzyme in homeostatic regulation of blood glucose levels. The sequence is that of Glucose-6-phosphatase catalytic subunit 1 (G6pc1) from Mus musculus (Mouse).